Consider the following 101-residue polypeptide: Small ribosomal subunit protein uS14A (101 aa).

A disordered region spans residues 31–73 (IKSPSTTPEARVAAQSELNRQPRDASPVRVRNRDSVDGRPRGH). The segment covering 61–70 (RNRDSVDGRP) has biased composition (basic and acidic residues).

Belongs to the universal ribosomal protein uS14 family. In terms of assembly, part of the 30S ribosomal subunit. Contacts proteins S3 and S10.

In terms of biological role, binds 16S rRNA, required for the assembly of 30S particles and may also be responsible for determining the conformation of the 16S rRNA at the A site. This is Small ribosomal subunit protein uS14A from Mycolicibacterium vanbaalenii (strain DSM 7251 / JCM 13017 / BCRC 16820 / KCTC 9966 / NRRL B-24157 / PYR-1) (Mycobacterium vanbaalenii).